Consider the following 265-residue polypeptide: Phosphatidylglycerol--prolipoprotein diacylglyceryl transferase (265 aa).

Transmembrane regions (helical) follow at residues 10-30 (VAIA…LIGI), 56-76 (LVFW…VLFY), 87-107 (LILQ…GVLL), and 117-137 (GKGF…GLGA). An a 1,2-diacyl-sn-glycero-3-phospho-(1'-sn-glycerol)-binding site is contributed by R139. A run of 3 helical transmembrane segments spans residues 172-192 (PSQL…LWFY), 200-220 (MAVS…VEFV), and 227-247 (LGYL…PMIL).

This sequence belongs to the Lgt family.

The protein resides in the cell inner membrane. The enzyme catalyses L-cysteinyl-[prolipoprotein] + a 1,2-diacyl-sn-glycero-3-phospho-(1'-sn-glycerol) = an S-1,2-diacyl-sn-glyceryl-L-cysteinyl-[prolipoprotein] + sn-glycerol 1-phosphate + H(+). The protein operates within protein modification; lipoprotein biosynthesis (diacylglyceryl transfer). Its function is as follows. Catalyzes the transfer of the diacylglyceryl group from phosphatidylglycerol to the sulfhydryl group of the N-terminal cysteine of a prolipoprotein, the first step in the formation of mature lipoproteins. The chain is Phosphatidylglycerol--prolipoprotein diacylglyceryl transferase from Azotobacter vinelandii (strain DJ / ATCC BAA-1303).